Here is a 321-residue protein sequence, read N- to C-terminus: tRNA dimethylallyltransferase (321 aa).

25–32 (GPTASGKS) is a binding site for ATP. 27 to 32 (TASGKS) lines the substrate pocket. An interaction with substrate tRNA region spans residues 50–53 (DSMQ).

This sequence belongs to the IPP transferase family. In terms of assembly, monomer. The cofactor is Mg(2+).

It carries out the reaction adenosine(37) in tRNA + dimethylallyl diphosphate = N(6)-dimethylallyladenosine(37) in tRNA + diphosphate. Its function is as follows. Catalyzes the transfer of a dimethylallyl group onto the adenine at position 37 in tRNAs that read codons beginning with uridine, leading to the formation of N6-(dimethylallyl)adenosine (i(6)A). This is tRNA dimethylallyltransferase from Rhodopseudomonas palustris (strain ATCC BAA-98 / CGA009).